Consider the following 376-residue polypeptide: Putative glutamate--cysteine ligase 2 (376 aa).

It belongs to the glutamate--cysteine ligase type 2 family. YbdK subfamily.

The enzyme catalyses L-cysteine + L-glutamate + ATP = gamma-L-glutamyl-L-cysteine + ADP + phosphate + H(+). In terms of biological role, ATP-dependent carboxylate-amine ligase which exhibits weak glutamate--cysteine ligase activity. This is Putative glutamate--cysteine ligase 2 from Paracoccus denitrificans (strain Pd 1222).